The primary structure comprises 321 residues: Solute carrier family 25 member 33 (321 aa).

Solcar repeat units follow at residues 9–118 (ENTL…AKEQ), 126–213 (NSNI…LKKY), and 231–315 (TSFF…IVYL). 6 helical membrane-spanning segments follow: residues 12-32 (LLHL…TCPL), 49-65 (VYYP…AGMV), 121-141 (GIFV…AAFI), 190-210 (LTAS…YESL), 233-253 (FFGL…IAYP), and 298-318 (QIPN…LLED).

The protein belongs to the mitochondrial carrier (TC 2.A.29) family. As to expression, expressed in the central nervous system. Also expressed in testis and skeletal muscle. Weakly expressed in heart, liver, kidney, prostate, colon and peripheral blood leukocytes.

It is found in the mitochondrion inner membrane. It carries out the reaction UTP(in) + UDP(out) = UTP(out) + UDP(in). It catalyses the reaction dUTP(out) + UTP(in) = dUTP(in) + UTP(out). The enzyme catalyses 5-methyl-UTP(out) + UTP(in) = 5-methyl-UTP(in) + UTP(out). The catalysed reaction is 5-methyl-UDP(out) + UTP(in) = 5-methyl-UDP(in) + UTP(out). It carries out the reaction UTP(in) + CTP(out) = UTP(out) + CTP(in). It catalyses the reaction CDP(out) + UTP(in) = CDP(in) + UTP(out). The enzyme catalyses dCTP(out) + UTP(in) = dCTP(in) + UTP(out). The catalysed reaction is dCDP(out) + UTP(in) = dCDP(in) + UTP(out). It carries out the reaction UTP(in) + GTP(out) = UTP(out) + GTP(in). It catalyses the reaction UTP(in) + GDP(out) = UTP(out) + GDP(in). The enzyme catalyses dGTP(out) + UTP(in) = dGTP(in) + UTP(out). The catalysed reaction is dGDP(out) + UTP(in) = dGDP(in) + UTP(out). It carries out the reaction ITP(out) + UTP(in) = ITP(in) + UTP(out). With respect to regulation, inhibited by pyridoxal 5'-phosphate, 4,7-diphenyl-1,10-phenanthroline, tannic acid, and mercurials (mercury dichloride, mersalyl acid, p-hydroxymercuribenzoate). Functionally, mitochondrial transporter that imports/exports pyrimidine nucleotides into and from mitochondria. Selectively transports uridine, thymidine, guanosine, cytosine and inosine (deoxy)nucleoside di- and triphosphates by an antiport mechanism. May import (deoxy)nucleoside triphosphates in exchange for intramitochondrial (deoxy)nucleoside diphosphates, thus providing precursors necessary for de novo synthesis of mitochondrial DNA and RNA while exporting products of their catabolism. Participates in mitochondrial genome maintenance, regulation of mitochondrial membrane potential and mitochondrial respiration. Upon INS or IGF1 stimulation regulates cell growth and proliferation by controlling mitochondrial DNA replication and transcription, the ratio of mitochondria-to nuclear-encoded components of the electron transport chain resulting in control of mitochondrial ROS production. Participates in dendritic cell endocytosis and may associate with mitochondrial oxidative phosphorylation. The chain is Solute carrier family 25 member 33 (SLC25A33) from Homo sapiens (Human).